The chain runs to 483 residues: Phosphoglucosamine mutase (483 aa).

Catalysis depends on Ser131, which acts as the Phosphoserine intermediate. 4 residues coordinate Mg(2+): Ser131, Asp272, Asp274, and Asp276. Ser131 is modified (phosphoserine).

Belongs to the phosphohexose mutase family. It depends on Mg(2+) as a cofactor. Post-translationally, activated by phosphorylation.

The catalysed reaction is alpha-D-glucosamine 1-phosphate = D-glucosamine 6-phosphate. Catalyzes the conversion of glucosamine-6-phosphate to glucosamine-1-phosphate. In Magnetococcus marinus (strain ATCC BAA-1437 / JCM 17883 / MC-1), this protein is Phosphoglucosamine mutase.